An 859-amino-acid polypeptide reads, in one-letter code: Bifunctional levopimaradiene synthase, chloroplastic (859 aa).

The N-terminal 70 residues, 1–70, are a transit peptide targeting the chloroplast; that stretch reads MALLSSSLSS…IACVGEDSLS (70 aa). Substrate is bound at residue Lys-259. Residues Asp-392 and Asp-394 each contribute to the Mg(2+) site. The DXDD motif motif lies at 392–395; it reads DIDD. Lys-479 is a binding site for substrate. Asp-611, Asp-615, Asn-755, Thr-759, and Glu-763 together coordinate Mg(2+). The short motif at 611–615 is the DDXXD motif element; it reads DDLYD.

It belongs to the terpene synthase family. Tpsd subfamily. The cofactor is Mg(2+).

The protein localises to the plastid. The protein resides in the chloroplast. It carries out the reaction (2E,6E,10E)-geranylgeranyl diphosphate = (+)-copalyl diphosphate. It catalyses the reaction (+)-copalyl diphosphate = abieta-8(14),12-diene + diphosphate. It functions in the pathway terpene metabolism; oleoresin biosynthesis. Involved in defensive oleoresin formation in conifers in response to insect attack or other injury. Involved in diterpene (C20) olefins biosynthesis. Bifunctional enzyme that catalyzes two sequential cyclizations of geranylgeranyl diphosphate (GGPP) to levopimaradiene. Levopimaradiene is the major products of the enzyme followed by abietadiene, neoabietadiene and palustradiene. This Picea abies (Norway spruce) protein is Bifunctional levopimaradiene synthase, chloroplastic (TPS-LAS).